A 470-amino-acid polypeptide reads, in one-letter code: MNPNQKIIAIGSASLGILILNVILHVVSIIVTVLVLNNNGTGLNCNGTIIREYNETVRVERITQWYNTNTIEYIERPSNEYYMNNTEPLCEAQGFAPFSKDNGIRIGSRGHVFVIREPFVSCSPSECRTFFLTQGSLLNDKHSNGTVKDRSPYRTLMSVKIGQSPNVYQARFESVAWSATACHDGKKWMTVGVTGPDNQAVAVVNYGGVPVDIINSWAGDILRTQESSCTCIKGDCYWVMTDGPANRQAKYRIFKAKDGRIIGQTDISFNGGHIEECSCYPNEGKVECICRDNWTGTNRPILVISSDLSYTVGYLCAGIPTDTPRGEDSQFTGSCTSPLGNKGYGVKGFGFRQGTDVWAGRTISRTSRSGFEIIKIRNGWTQNSKDQIRRQVIIDNLNWSGYSGSFTLPVELTKKGCLVPCFWVEMIRGKPEETTIWTSSSSIVMCGVDHKIASWSWHDGAILPFDIDKM.

Over 1–14 the chain is Intravirion; it reads MNPNQKIIAIGSAS. Positions 11 to 32 are involved in apical transport and lipid raft association; sequence GSASLGILILNVILHVVSIIVT. A helical membrane pass occupies residues 15-35; it reads LGILILNVILHVVSIIVTVLV. A hypervariable stalk region region spans residues 32 to 86; that stretch reads TVLVLNNNGTGLNCNGTIIREYNETVRVERITQWYNTNTIEYIERPSNEYYMNNT. Topologically, residues 36–470 are virion surface; sequence LNNNGTGLNC…AILPFDIDKM (435 aa). N39, N46, N54, and N84 each carry an N-linked (GlcNAc...) asparagine; by host glycan. Positions 89-470 are head of neuraminidase; that stretch reads LCEAQGFAPF…AILPFDIDKM (382 aa). Cystine bridges form between C90/C417, C122/C127, C182/C229, C231/C236, C277/C290, C279/C288, C316/C335, and C421/C446. R116 is a binding site for substrate. An N-linked (GlcNAc...) asparagine; by host glycan is attached at N144. D149 (proton donor/acceptor) is an active-site residue. Position 150 (R150) interacts with substrate. A substrate-binding site is contributed by 275–276; the sequence is EE. R291 is a binding site for substrate. A Ca(2+)-binding site is contributed by D292. N293 is a glycosylation site (N-linked (GlcNAc...) asparagine; by host). Ca(2+) is bound by residues G296 and D322. R368 is a substrate binding site. Residue N398 is glycosylated (N-linked (GlcNAc...) asparagine; by host). The Nucleophile role is filled by Y402.

The protein belongs to the glycosyl hydrolase 34 family. Homotetramer. Requires Ca(2+) as cofactor. Post-translationally, N-glycosylated.

The protein localises to the virion membrane. It localises to the host apical cell membrane. It carries out the reaction Hydrolysis of alpha-(2-&gt;3)-, alpha-(2-&gt;6)-, alpha-(2-&gt;8)- glycosidic linkages of terminal sialic acid residues in oligosaccharides, glycoproteins, glycolipids, colominic acid and synthetic substrates.. With respect to regulation, inhibited by the neuraminidase inhibitors zanamivir (Relenza) and oseltamivir (Tamiflu). These drugs interfere with the release of progeny virus from infected cells and are effective against all influenza strains. Resistance to neuraminidase inhibitors is quite rare. Functionally, catalyzes the removal of terminal sialic acid residues from viral and cellular glycoconjugates. Cleaves off the terminal sialic acids on the glycosylated HA during virus budding to facilitate virus release. Additionally helps virus spread through the circulation by further removing sialic acids from the cell surface. These cleavages prevent self-aggregation and ensure the efficient spread of the progeny virus from cell to cell. Otherwise, infection would be limited to one round of replication. Described as a receptor-destroying enzyme because it cleaves a terminal sialic acid from the cellular receptors. May facilitate viral invasion of the upper airways by cleaving the sialic acid moieties on the mucin of the airway epithelial cells. Likely to plays a role in the budding process through its association with lipid rafts during intracellular transport. May additionally display a raft-association independent effect on budding. Plays a role in the determination of host range restriction on replication and virulence. Sialidase activity in late endosome/lysosome traffic seems to enhance virus replication. The polypeptide is Neuraminidase (Aves (Horse)).